Consider the following 73-residue polypeptide: Putative membrane protein insertion efficiency factor (73 aa).

This sequence belongs to the UPF0161 family.

It localises to the cell inner membrane. Could be involved in insertion of integral membrane proteins into the membrane. The polypeptide is Putative membrane protein insertion efficiency factor (Phocaeicola vulgatus (strain ATCC 8482 / DSM 1447 / JCM 5826 / CCUG 4940 / NBRC 14291 / NCTC 11154) (Bacteroides vulgatus)).